Here is a 522-residue protein sequence, read N- to C-terminus: Tetratricopeptide repeat protein 39C (522 aa).

TPR repeat units follow at residues Ser-254–Gln-287, His-292–Ser-325, and Gly-424–Arg-457.

The protein belongs to the TTC39 family.

This Rattus norvegicus (Rat) protein is Tetratricopeptide repeat protein 39C (Ttc39c).